A 288-amino-acid chain; its full sequence is Purine nucleoside phosphorylase (288 aa).

Residue 65 to 66 coordinates phosphate; that stretch reads RN. Met-201 serves as a coordination point for substrate. Thr-202 is a binding site for phosphate.

Belongs to the PNP/MTAP phosphorylase family. MTAP subfamily. As to quaternary structure, homotrimer.

The protein resides in the cytoplasm. It is found in the nucleus. The enzyme catalyses a purine D-ribonucleoside + phosphate = a purine nucleobase + alpha-D-ribose 1-phosphate. It functions in the pathway purine metabolism; purine nucleoside salvage. Its function is as follows. Purine nucleoside phosphorylase involved in purine salvage. The chain is Purine nucleoside phosphorylase from Drosophila pseudoobscura pseudoobscura (Fruit fly).